Consider the following 201-residue polypeptide: Ephrin-A4 (201 aa).

The N-terminal stretch at 1-25 is a signal peptide; that stretch reads MRLLPLLRTVLWAAFLGSPLRGGSS. Residues 26–155 enclose the Ephrin RBD domain; the sequence is LRHVVYWNSS…RLQVSVCCKE (130 aa). Asparagine 33 carries N-linked (GlcNAc...) asparagine glycosylation. Intrachain disulfides connect cysteine 58-cysteine 99 and cysteine 86-cysteine 144. Serine 170 carries GPI-anchor amidated serine lipidation. Residues 171-201 constitute a propeptide, removed in mature form; that stretch reads GTSGWRGGDTPSPLCLLLLLLLLILRLLRIL.

This sequence belongs to the ephrin family. Expressed in the adult spleen, lymph node, prostate, ovary, small intestine, and colon, and in fetal heart, lung, liver and kidney. Also detected in hematopoietic cell lines.

It is found in the cell membrane. Its subcellular location is the secreted. Cell surface GPI-bound ligand for Eph receptors, a family of receptor tyrosine kinases which are crucial for migration, repulsion and adhesion during neuronal, vascular and epithelial development. Binds promiscuously Eph receptors residing on adjacent cells, leading to contact-dependent bidirectional signaling into neighboring cells. May play a role in the interaction between activated B-lymphocytes and dendritic cells in tonsils. The sequence is that of Ephrin-A4 (EFNA4) from Homo sapiens (Human).